We begin with the raw amino-acid sequence, 573 residues long: Putative ATP-dependent RNA helicase R563 (573 aa).

Residues 57-233 (INPKTPYKGL…ALTMNLLVRN (177 aa)) enclose the Helicase ATP-binding domain. 70–77 (HRIGAGKT) provides a ligand contact to ATP. A DEAH box motif is present at residues 179–182 (DEVH). The 178-residue stretch at 374–551 (KILRKIKRCN…AFEKALKEAA (178 aa)) folds into the Helicase C-terminal domain.

This sequence belongs to the DEAD box helicase family. DEAH subfamily.

The protein resides in the virion. It catalyses the reaction ATP + H2O = ADP + phosphate + H(+). The sequence is that of Putative ATP-dependent RNA helicase R563 from Acanthamoeba polyphaga mimivirus (APMV).